The primary structure comprises 446 residues: MPKRTFTKDDIRKFAEEENVRYLRLQFTDILGTIKNVEVPVSQLEKVLDNEMMFDGSSIEGFVRIEESDMYLHPDLDTWVIFPWTAGQGKVARLICDVYKTDGTPFEGDPRANLKRVLKEMEDLGFTDFNLGPEPEFFLFKLDEKGEPTLELNDDGGYFDLAPTDLGENCRRDIVLELEDMGFDIEASHHEVAPGQHEIDFKYADAVTACDNIQTFKLVVKTIARKHNLHATFMPKPLFGVNGSGMHFNVSLFKGKENAFFDPNTEMGLTETAYQFTAGVLKNARGFTAVCNPLVNSYKRLVPGYEAPCYIAWSGKNRSPLIRVPSSRGLSTRIEVRSVDPAANPYMALAAILESGLDGIKNKLKVPEPVNQNIYEMNREEREAVGIQDLPSTLYTALKAMRENEVIKKALGNHIYNQFINSKSIEWDYYRTQVSEWERDQYMKQY.

Positions Glu18–Gly103 constitute a GS beta-grasp domain. The 337-residue stretch at Pro110–Tyr446 folds into the GS catalytic domain. Residues Glu134 and Glu136 each contribute to the Mg(2+) site. Glu186 is a binding site for ATP. 2 residues coordinate Mg(2+): Glu191 and Glu198. Residues Asn242–Gly243 and Gly243 contribute to the L-glutamate site. Residue His247 coordinates Mg(2+). Ser251 provides a ligand contact to ATP. L-glutamate-binding residues include Arg300, Glu306, and Arg318. Positions 318 and 323 each coordinate ATP. Residue Glu335 coordinates Mg(2+). Arg337 is an L-glutamate binding site.

This sequence belongs to the glutamine synthetase family. In terms of assembly, oligomer of 12 subunits arranged in the form of two hexagons. In its feedback-inhibited form, interacts with TnrA in order to block its DNA-binding activity. Mg(2+) is required as a cofactor.

The protein localises to the cytoplasm. It carries out the reaction L-glutamate + NH4(+) + ATP = L-glutamine + ADP + phosphate + H(+). Inhibited by glutamine. In terms of biological role, glutamine synthetase (GS) is an unusual multitasking protein that functions as an enzyme, a transcription coregulator, and a chaperone in ammonium assimilation and in the regulation of genes involved in nitrogen metabolism. It catalyzes the ATP-dependent biosynthesis of glutamine from glutamate and ammonia. Feedback-inhibited GlnA also interacts with and regulates the activity of the transcriptional regulator TnrA. During nitrogen limitation, TnrA is in its DNA-binding active state and turns on the transcription of genes required for nitrogen assimilation. Under conditions of nitrogen excess, feedback-inhibited GlnA forms a stable complex with TnrA, which inhibits its DNA-binding activity. In contrast, feedback-inhibited GlnA acts as a chaperone to stabilize the DNA-binding activity of GlnR, which represses the transcription of nitrogen assimilation genes. The polypeptide is Glutamine synthetase (Staphylococcus aureus (strain MRSA252)).